A 425-amino-acid polypeptide reads, in one-letter code: Tyrosine--tRNA ligase (425 aa).

Residue Tyr-37 coordinates L-tyrosine. Positions 42–51 (PTADSLHLGH) match the 'HIGH' region motif. Tyr-175 and Gln-179 together coordinate L-tyrosine. A 'KMSKS' region motif is present at residues 235-239 (KFGKT). Lys-238 provides a ligand contact to ATP. Residues 357 to 414 (ADLQQALVSAELVPSRGQARTMISSNAVTINGEKQANPEYIFSASDRLFDRYTLLRRG) enclose the S4 RNA-binding domain.

Belongs to the class-I aminoacyl-tRNA synthetase family. TyrS type 1 subfamily. In terms of assembly, homodimer.

Its subcellular location is the cytoplasm. The catalysed reaction is tRNA(Tyr) + L-tyrosine + ATP = L-tyrosyl-tRNA(Tyr) + AMP + diphosphate + H(+). Catalyzes the attachment of tyrosine to tRNA(Tyr) in a two-step reaction: tyrosine is first activated by ATP to form Tyr-AMP and then transferred to the acceptor end of tRNA(Tyr). In Pectobacterium atrosepticum (strain SCRI 1043 / ATCC BAA-672) (Erwinia carotovora subsp. atroseptica), this protein is Tyrosine--tRNA ligase.